We begin with the raw amino-acid sequence, 811 residues long: Zinc finger CCCH domain-containing protein 11A (811 aa).

3 consecutive C3H1-type zinc fingers follow at residues 2-30, 32-58, and 61-87; these read PNQG…HCEA, LGNE…HMEI, and KRSE…HHNR. Ser109 is modified (phosphoserine). Glycyl lysine isopeptide (Lys-Gly) (interchain with G-Cter in SUMO2) cross-links involve residues Lys115 and Lys125. At Ser133 the chain carries Phosphoserine. Disordered stretches follow at residues 140 to 195, 224 to 258, 286 to 352, and 368 to 434; these read MKVE…GLRV, KKMK…KENV, GKRK…EKVN, and ERAS…TCIK. Residue Lys141 forms a Glycyl lysine isopeptide (Lys-Gly) (interchain with G-Cter in SUMO2) linkage. A phosphoserine mark is found at Ser150 and Ser172. Residues 161-176 show a composition bias toward acidic residues; the sequence is ADDDEDDDDQFSEEGD. Phosphoserine is present on Ser291. Composition is skewed to basic and acidic residues over residues 310 to 323 and 368 to 391; these read KKVE…DKTP and ERAS…KTDD. Thr322 carries the phosphothreonine modification. Positions 363-424 form a coiled coil; the sequence is EEILLERASQ…KHRQQEAERQ (62 aa). Position 371 is a phosphoserine (Ser371). Over residues 392 to 403 the composition is skewed to polar residues; sequence STSGARSSSTIR. Basic and acidic residues predominate over residues 418–434; sequence QQEAERQKSKKDTTCIK. Residue Lys479 forms a Glycyl lysine isopeptide (Lys-Gly) (interchain with G-Cter in SUMO2) linkage. The interval 483–550 is disordered; the sequence is ALRVQQSSES…KEASGETTGV (68 aa). The segment covering 487 to 499 has biased composition (low complexity); sequence QQSSESSTSSPSQ. Lys620 participates in a covalent cross-link: Glycyl lysine isopeptide (Lys-Gly) (interchain with G-Cter in SUMO2). The tract at residues 716-769 is disordered; sequence TVPEAENPRDSLVLPPTQSSSDSSPPEVSGPSSSQMSMKTRRLSSASTGKPQLS. Low complexity predominate over residues 730–749; sequence PPTQSSSDSSPPEVSGPSSS. The span at 750–766 shows a compositional bias: polar residues; sequence QMSMKTRRLSSASTGKP.

As to quaternary structure, interacts with TREX complex components THOC2, DDX39 and POLDIP3; the interactions are ATP-dependent. Interacts with PABPN1; this interaction retains ZC3H11A in nuclear speckles. Interacts with KPNA3.

The protein resides in the nucleus speckle. Functionally, through its association with TREX complex components, may participate in the export and post-transcriptional coordination of selected mRNA transcripts, including those required to maintain the metabolic processes in embryonic cells. Binds RNA. The polypeptide is Zinc finger CCCH domain-containing protein 11A (ZC3H11A) (Pongo abelii (Sumatran orangutan)).